A 339-amino-acid chain; its full sequence is Photosystem II assembly lipoprotein Ycf48 (339 aa).

The N-terminal stretch at 1–22 (MVIVKSWQKIFALLVVLLLCIG) is a signal peptide. A lipid anchor (N-palmitoyl cysteine) is attached at cysteine 23. Residue cysteine 23 is the site of S-diacylglycerol cysteine attachment.

It belongs to the Ycf48 family. Part of early PSII assembly complexes which includes D1 (psbA) and PsbI; not found in mature PSII. Binds to the lumenal side of PSII complexes. Interacts with YidC.

It localises to the cellular thylakoid membrane. In terms of biological role, a factor required for optimal assembly of photosystem II (PSII), acting in the early stages of PSII assembly. Also plays a role in replacement of photodamaged D1 (psbA). Assists YidC in synthesis of chlorophyll-binding proteins. The chain is Photosystem II assembly lipoprotein Ycf48 from Trichormus variabilis (strain ATCC 29413 / PCC 7937) (Anabaena variabilis).